The primary structure comprises 457 residues: Reticulon-like protein B18 (457 aa).

A disordered region spans residues 94 to 183; the sequence is AAVTARRSKT…SPSSDQPQDV (90 aa). A compositionally biased stretch (basic and acidic residues) spans 124-136; sequence LRSEAMVDTKENT. Residues 149–163 are compositionally biased toward basic residues; sequence NQRKQKKLGRSKKEK. A compositionally biased stretch (low complexity) spans 166–183; the sequence is SVPLLASPSPSSDQPQDV. One can recognise a Reticulon domain in the interval 195–385; it reads ISDLIMWRDV…AFWNLTSLKT (191 aa). Transmembrane regions (helical) follow at residues 208–228, 230–250, 314–334, and 377–397; these read TLWF…AKGF, FSVF…SFLS, YGYL…SFTI, and FWNL…VVVI. The disordered stretch occupies residues 407–457; it reads DSEDEEEKKQQEKTHPEQQKSPEDKSTSPRSAEEEQALVLVAETKAPKKLY. The segment covering 413 to 439 has biased composition (basic and acidic residues); the sequence is EKKQQEKTHPEQQKSPEDKSTSPRSAE.

It is found in the endoplasmic reticulum membrane. The chain is Reticulon-like protein B18 (RTNLB18) from Arabidopsis thaliana (Mouse-ear cress).